The sequence spans 474 residues: Vacuolar basic amino acid transporter 2 (474 aa).

Topologically, residues 1–33 (MSISNWITTAYLITSTSFQPLYGSFSDALGRRN) are cytoplasmic. Residues 34–54 (CLFFANGAFTIGCLACGFSKN) traverse the membrane as a helical segment. Residues 55-62 (IYMLSFMR) lie on the Vacuolar side of the membrane. A helical transmembrane segment spans residues 63-85 (ALTGIGGGGLITLSTIVNSDVIP). The Cytoplasmic segment spans residues 86-97 (SSKRGIFQAFQN). A helical membrane pass occupies residues 98 to 118 (LLLGFGAICGASFGGTIASSI). Residues 119–121 (GWR) lie on the Vacuolar side of the membrane. The helical transmembrane segment at 122 to 142 (WCFLIQVPISVISSILMNYYV) threads the bilayer. Topologically, residues 143 to 167 (PNQKEYNRQNSSIFQNPGKILRDID) are cytoplasmic. A helical membrane pass occupies residues 168–188 (VMGSILIITGLTLQLLYLSLG). Over 189-196 (CSTSKLSW) the chain is Vacuolar. A helical transmembrane segment spans residues 197 to 217 (TSPSVLLLLVGSVIILLLFIL). Residues 218–238 (HERKTSARAIIPMELVNSSYS) lie on the Cytoplasmic side of the membrane. A helical membrane pass occupies residues 239–259 (VVVLSISILVGFASYAYLFTL). Over 260 to 273 (PLFFQIVLGDSTAK) the chain is Vacuolar. The chain crosses the membrane as a helical span at residues 274–294 (AGLRLTIPSLFTPVGSLITGF). Residues 295–303 (SMSKYNCLR) are Cytoplasmic-facing. Residues 304–324 (LLLYIGISLMFLGNFLFLFIE) form a helical membrane-spanning segment. Topologically, residues 325-331 (KTSPNWL) are vacuolar. The helical transmembrane segment at 332-352 (IGLFLIPANLGQGITFPTTLF) threads the bilayer. At 353-375 (TFIFMFSKSDQATATSTLYLFRS) the chain is on the cytoplasmic side. The helical transmembrane segment at 376–396 (IGSVWGVAISAGVIQLSFAGL) threads the bilayer. Residues 397 to 447 (LRSNLKGLLDENKIKKLIVQLSANSSYIGSLHGEVKNTVIKSFDEATKRAH) lie on the Vacuolar side of the membrane. A glycan (N-linked (GlcNAc...) asparagine) is linked at N420. The chain crosses the membrane as a helical span at residues 448 to 468 (LMSTLLSSLALILCILKDNLA). The Cytoplasmic portion of the chain corresponds to 469–474 (KPKTRR).

Belongs to the major facilitator superfamily.

It localises to the vacuole membrane. Functionally, transporter required for vacuolar uptake of histidine, arginine and lysine and to a lesser extent tyrosine. The sequence is that of Vacuolar basic amino acid transporter 2 (VBA2) from Saccharomyces cerevisiae (strain ATCC 204508 / S288c) (Baker's yeast).